The sequence spans 152 residues: Syntaxin-8A (152 aa).

Positions 1–14 (MNNNNNFNSNFNSN) are enriched in low complexity. The segment at 1–22 (MNNNNNFNSNFNSNRISSTQPY) is disordered. The Cytoplasmic portion of the chain corresponds to 1–131 (MNNNNNFNSN…LTQQSKTTGY (131 aa)). In terms of domain architecture, t-SNARE coiled-coil homology spans 60–122 (KRDMEEQDKM…RNTTKNLITL (63 aa)). The chain crosses the membrane as a helical; Anchor for type IV membrane protein span at residues 132–152 (CSAICFLLLVLLVIIILASVL).

It belongs to the syntaxin family. Component of the SNARE complex composed of syn7A, syn8A, vamp7A and vti1A.

The protein localises to the endosome membrane. Functionally, involved in the targeting and/or fusion of transport vesicles to their target membrane during transport of proteins from the early endosome to the lysosome. Required for fusion of late endosomes with lysosomes and homotypic lysosomal fusion. This is Syntaxin-8A from Dictyostelium discoideum (Social amoeba).